Here is a 119-residue protein sequence, read N- to C-terminus: MARVKRGVTAHAKHKKVYKVTKGFSGRRKNTIRAAKAAADKAGQYAFRDRKRKKRTFRALWIQRLNAAVRPFGMTYSRFIDGLSKSGITVDRKVLSDLAINEPAAFQAIAEKAKAALAA.

Belongs to the bacterial ribosomal protein bL20 family.

Binds directly to 23S ribosomal RNA and is necessary for the in vitro assembly process of the 50S ribosomal subunit. It is not involved in the protein synthesizing functions of that subunit. The polypeptide is Large ribosomal subunit protein bL20 (Nitrobacter winogradskyi (strain ATCC 25391 / DSM 10237 / CIP 104748 / NCIMB 11846 / Nb-255)).